Here is a 152-residue protein sequence, read N- to C-terminus: S-protein homolog 4 (152 aa).

A signal peptide spans 1 to 23 (MTTMLKTQVHVVVIYLLIQIAFS). N71 is a glycosylation site (N-linked (GlcNAc...) asparagine).

Belongs to the plant self-incompatibility (S1) protein family.

It is found in the secreted. The chain is S-protein homolog 4 from Arabidopsis thaliana (Mouse-ear cress).